The primary structure comprises 158 residues: Snaclec jerdonuxin subunit alpha (158 aa).

A signal peptide spans 1 to 23 (MGRFTFVSFGLLVVFLSLSGTGA). 3 disulfides stabilise this stretch: Cys-27-Cys-38, Cys-55-Cys-152, and Cys-127-Cys-144. A C-type lectin domain is found at 34-153 (YDRYCYQAFS…CGTENPFVCK (120 aa)).

Belongs to the snaclec family. Tetramer of 4 heterodimers of alpha and beta subunits; disulfide-linked. Expressed by the venom gland.

It localises to the secreted. In terms of biological role, snaclec that strongly induces platelet aggregation, in a dose-dependent manner. The chain is Snaclec jerdonuxin subunit alpha from Protobothrops jerdonii (Jerdon's pitviper).